Here is a 556-residue protein sequence, read N- to C-terminus: Putative solute carrier family 22 member 31 (556 aa).

The Cytoplasmic segment spans residues 1–23 (MEQEARVLRAAGGFGRARRLLAS). The helical transmembrane segment at 24 to 44 (ASWVPCIVLGLVLSSEELLTA) threads the bilayer. The Extracellular portion of the chain corresponds to 45–128 (QPAPHCRPDP…WNLVCGDGWK (84 aa)). A helical transmembrane segment spans residues 129–149 (VPLEQVSHLLGWLLGCVILGA). Topologically, residues 150–157 (GCDRFGRR) are cytoplasmic. The chain crosses the membrane as a helical span at residues 158–178 (AVFVASLVLTTGLGASEALAA). Over 179–182 (SFPT) the chain is Extracellular. The helical transmembrane segment at 183 to 203 (LLVLRLLHGGTLAGALLALYL) threads the bilayer. At 204 to 218 (ARLELCDPPHRLAFS) the chain is on the cytoplasmic side. Residues 219–239 (MGAGLFSVVGTLLLPGLAALV) traverse the membrane as a helical segment. Topologically, residues 240-246 (QDWRLLQ) are extracellular. A helical membrane pass occupies residues 247–267 (GLGALMSGLLLLFWGFPALFP). Residues 268–339 (ESPCWLLATG…LRTRVTWRNG (72 aa)) lie on the Cytoplasmic side of the membrane. Residues 340 to 357 (LILGFSSLVGGGIRASFR) form a helical membrane-spanning segment. The Extracellular segment spans residues 358 to 366 (RSLAPQVPT). The chain crosses the membrane as a helical span at residues 367–387 (FYLPYFLEAGLEAAALVFLLL). Topologically, residues 388-395 (TADCCGRR) are cytoplasmic. A helical membrane pass occupies residues 396 to 416 (PVLLLGTMVTGLASLLLLAGA). Residues 417–420 (QYLP) lie on the Extracellular side of the membrane. Residues 421-441 (GWTVLFLSVLGLLASRAVSAL) traverse the membrane as a helical segment. Over 442–448 (SSLFAAE) the chain is Cytoplasmic. Residues 449–469 (VFPTVIRGAGLGLVLGAGFLG) form a helical membrane-spanning segment. The Extracellular segment spans residues 470–483 (QAAGPLDTLHGRQG). A helical membrane pass occupies residues 484–504 (FFLQQVVFASLAVLALLCVLL). Residues 505 to 556 (LPESRSRGLPQSLQDADRLRRSPLLRGRPRQDHLPLLPPSNSYWAGHTPEQH) lie on the Cytoplasmic side of the membrane. Residues 524–556 (RRSPLLRGRPRQDHLPLLPPSNSYWAGHTPEQH) form a disordered region.

Belongs to the major facilitator (TC 2.A.1) superfamily. Organic cation transporter (TC 2.A.1.19) family.

The protein localises to the membrane. Its function is as follows. Organic anion transporter that mediates the uptake of ions. The chain is Putative solute carrier family 22 member 31 from Homo sapiens (Human).